Reading from the N-terminus, the 102-residue chain is Biotrophy-associated secreted protein 2 (102 aa).

Residues 1-19 form the signal peptide; sequence MVRVSTFAAILAMALSVTA. N46 is a glycosylation site (N-linked (GlcNAc...) asparagine).

The protein resides in the secreted. Secreted effector involved in biotrophic colonization of plant cells. In Pyricularia oryzae (strain 70-15 / ATCC MYA-4617 / FGSC 8958) (Rice blast fungus), this protein is Biotrophy-associated secreted protein 2.